We begin with the raw amino-acid sequence, 760 residues long: MRYNQFSYIPTSLERAAEELKELGFDLDLQKTAKASLESFLRKLFFHYPDSDYPLSHLIAKNDMDALSFFQSEQELSKEVFDLLALQVLGFIPGVDFTEADAFLDKLAFPIHFDETEIIKHIHHLLATRCKSGMTLIDDLVSQGMLTMDNDYHFFNGKSLATFDTSQLIREVVYVEAPLDTDQDGQLDLIKVNIIRPQSQKPLPTLMTPSPYHQGINEVANDKKLYRMEKELVVKKRRQITVEDRDFIPLETQPCKLPIGQNLESFSYINSYSLNDYFLARGFANIYVSGVGTAGSTGFMTSGNYAQIESFKAVIDWLNGRATAYTSHSKTHQVRADWANGLVCTTGKSYLGTMSTGLATTGVDGLAMIIAESAISSWYNYYRENGLVCSPGGYPGEDLDVLTELTYSRNLLAGDYLRHNDRYQELLNQQSQALDRQSGDYNQFWHDRNYLKNAHQIKCDVVYTHGLQDWNVKPRQVYEIFNALPSTINKHLFLHQGEHVYMHNWQSIDFRESMNALLCQKLLGLANDFSLPEMIWQDNTCPQNWQERKVFGTSTIKELDLGQELLLIDNHYGEDEFKAYGKDFRAFKAALFKGKANQALIDILLEEDLPINGEIVLQLKVKSSENKGLLSAQILDYGKKKRLGDLPIALTQSSIDNGQNFSREPLKELPFREDSYRVISKGFMNLQNRNNLSSIETIPNNKWMTVRLPLQPTIYHLEKGDTLRVILYTTDFEHTVRDNSNYALTIDLSQSQLIVPIASN.

Catalysis depends on charge relay system residues serine 349, aspartate 469, and histidine 499.

The protein belongs to the peptidase S15 family. Homodimer.

It localises to the cytoplasm. The catalysed reaction is Hydrolyzes Xaa-Pro-|- bonds to release unblocked, N-terminal dipeptides from substrates including Ala-Pro-|-p-nitroanilide and (sequentially) Tyr-Pro-|-Phe-Pro-|-Gly-Pro-|-Ile.. In terms of biological role, removes N-terminal dipeptides sequentially from polypeptides having unsubstituted N-termini provided that the penultimate residue is proline. In Streptococcus pyogenes serotype M1, this protein is Xaa-Pro dipeptidyl-peptidase.